A 59-amino-acid polypeptide reads, in one-letter code: Photosystem II reaction center protein K (59 aa).

Positions 1–22 are excised as a propeptide; it reads MLNIFSLIGLNSALYSSSCFFA. The helical transmembrane segment at 30-50 threads the bilayer; it reads FLSPIVDFMPVIPLLFFLLAF.

It belongs to the PsbK family. PSII is composed of 1 copy each of membrane proteins PsbA, PsbB, PsbC, PsbD, PsbE, PsbF, PsbH, PsbI, PsbJ, PsbK, PsbL, PsbM, PsbT, PsbX, PsbY, PsbZ, Psb30/Ycf12, at least 3 peripheral proteins of the oxygen-evolving complex and a large number of cofactors. It forms dimeric complexes.

It is found in the plastid. Its subcellular location is the chloroplast thylakoid membrane. One of the components of the core complex of photosystem II (PSII). PSII is a light-driven water:plastoquinone oxidoreductase that uses light energy to abstract electrons from H(2)O, generating O(2) and a proton gradient subsequently used for ATP formation. It consists of a core antenna complex that captures photons, and an electron transfer chain that converts photonic excitation into a charge separation. The polypeptide is Photosystem II reaction center protein K (Silene latifolia (White campion)).